The sequence spans 197 residues: 3-isopropylmalate dehydratase small subunit (197 aa).

Belongs to the LeuD family. LeuD type 1 subfamily. As to quaternary structure, heterodimer of LeuC and LeuD.

The catalysed reaction is (2R,3S)-3-isopropylmalate = (2S)-2-isopropylmalate. Its pathway is amino-acid biosynthesis; L-leucine biosynthesis; L-leucine from 3-methyl-2-oxobutanoate: step 2/4. Catalyzes the isomerization between 2-isopropylmalate and 3-isopropylmalate, via the formation of 2-isopropylmaleate. The chain is 3-isopropylmalate dehydratase small subunit from Shouchella clausii (strain KSM-K16) (Alkalihalobacillus clausii).